An 83-amino-acid polypeptide reads, in one-letter code: RNA-binding protein Hfq (83 aa).

The region spanning 9-68 (DPFLNALRKERIPVSIYLVNGIKLQGQVESFDQFVILLKNTVSQMVYKHAISTVVPSRAL) is the Sm domain.

Belongs to the Hfq family. In terms of assembly, homohexamer.

RNA chaperone that binds small regulatory RNA (sRNAs) and mRNAs to facilitate mRNA translational regulation in response to envelope stress, environmental stress and changes in metabolite concentrations. Also binds with high specificity to tRNAs. The polypeptide is RNA-binding protein Hfq (Pseudoalteromonas atlantica (strain T6c / ATCC BAA-1087)).